The following is a 198-amino-acid chain: COMM domain-containing protein 9 (198 aa).

N-acetylalanine is present on alanine 2. In terms of domain architecture, COMM spans 122 to 196; that stretch reads RLVDLDWRVD…RIRDQLSAVA (75 aa).

Belongs to the COMM domain-containing protein 9 family. Component of the commander complex consisting of the CCC subcomplex and the retriever subcomplex. Component of the CCC (COMMD/CCDC22/CCDC93) subcomplex consisting of COMMD1, COMMD2, COMMD3, COMMD4, COMMD5, COMMD6, COMMD7, COMMD8, COMMD9, COMMD10, CCDC22 and CCDC93; within the complex forms a heterodimer with COMMD7. Interacts with RELB and NFKB1/p105. Interacts with CCDC22, CCDC93, SCNN1B, CUL1.

It localises to the nucleus. Its subcellular location is the cytoplasmic vesicle. Functionally, scaffold protein in the commander complex that is essential for endosomal recycling of transmembrane cargos; the commander complex is composed of the CCC subcomplex and the retriever subcomplex. May modulate activity of cullin-RING E3 ubiquitin ligase (CRL) complexes. May down-regulate activation of NF-kappa-B. Modulates Na(+) transport in epithelial cells by regulation of apical cell surface expression of amiloride-sensitive sodium channel (ENaC) subunits. This Bos taurus (Bovine) protein is COMM domain-containing protein 9 (COMMD9).